The sequence spans 219 residues: Trafficking protein particle complex subunit 4 (219 aa).

Belongs to the TRAPP small subunits family. TRAPPC4 subfamily. As to quaternary structure, component of the multisubunit TRAPP (transport protein particle) complex, which includes at least TRAPPC2, TRAPPC2L, TRAPPC3, TRAPPC3L, TRAPPC4, TRAPPC5, TRAPPC8, TRAPPC9, TRAPPC10, TRAPPC11 and TRAPPC12. Interacts with SDC2.

It is found in the postsynaptic cell membrane. The protein localises to the golgi apparatus membrane. It localises to the endoplasmic reticulum. Its subcellular location is the vesicle. Functionally, core component of the TRAPP complexes which has a function of guanine nucleotide exchange factor activity for Rab1 GTPase. Plays a role in vesicular transport from endoplasmic reticulum to Golgi and autophagy. May play a role in dendrite postsynaptic membrane trafficking. In Homo sapiens (Human), this protein is Trafficking protein particle complex subunit 4.